A 722-amino-acid chain; its full sequence is Transmembrane channel-like protein 8 (722 aa).

The interval methionine 1–alanine 21 is disordered. At methionine 1 to arginine 118 the chain is on the cytoplasmic side. A phosphoserine mark is found at serine 6 and serine 18. A helical membrane pass occupies residues phenylalanine 119–leucine 139. At valine 140–serine 204 the chain is on the lumenal side. N-linked (GlcNAc...) asparagine glycosylation occurs at asparagine 184. A helical membrane pass occupies residues isoleucine 205 to leucine 225. Over glutamine 226 to asparagine 307 the chain is Cytoplasmic. Residues isoleucine 308–serine 328 traverse the membrane as a helical segment. The Lumenal segment spans residues glutamine 329–asparagine 375. The interval glutamate 366–serine 534 is TMC domain. N-linked (GlcNAc...) asparagine glycosylation is present at asparagine 375. The chain crosses the membrane as a helical span at residues leucine 376 to leucine 396. The Cytoplasmic portion of the chain corresponds to glycine 397 to glutamate 430. Residues leucine 431–leucine 451 form a helical membrane-spanning segment. At proline 452 to glycine 492 the chain is on the lumenal side. Residues leucine 493 to isoleucine 513 traverse the membrane as a helical segment. Residues lysine 514–phenylalanine 536 are Cytoplasmic-facing. A helical membrane pass occupies residues phenylalanine 537–isoleucine 557. Residues serine 558–leucine 598 lie on the Lumenal side of the membrane. A glycan (N-linked (GlcNAc...) asparagine) is linked at asparagine 571. A helical transmembrane segment spans residues serine 599 to isoleucine 619. At serine 620 to leucine 722 the chain is on the cytoplasmic side. Serine 658, serine 663, and serine 673 each carry phosphoserine. A disordered region spans residues serine 658–leucine 722. Residues phenylalanine 678–arginine 687 show a composition bias toward pro residues. The span at proline 689–serine 712 shows a compositional bias: low complexity. Serine 698 carries the post-translational modification Phosphoserine.

It belongs to the TMC family. Interacts with TMC6. Interacts and forms a complex with TMC6 and CIB1; the interaction stabilizes each component of the complex. Interacts and forms a complex with TMC6 and SLC30A1/ZNT1; the interaction regulates zinc transport into the ER. Interacts with TRADD; the interaction competes with TRADD/RIPK1/TRAF2/cIAPs complex I formation and facilites complex II formation. In terms of tissue distribution, expressed in thymus, lung, prostate, placenta, testis and spleen. Expressed in lymphocytes and peripheral lymphocytes.

Its subcellular location is the endoplasmic reticulum membrane. The protein localises to the golgi apparatus membrane. The protein resides in the nucleus membrane. In terms of biological role, acts as a regulatory protein involved in the regulation of numerous cellular processes. Together with its homolog TMC6/EVER1, forms a complex with calcium-binding protein CIB1 in lymphocytes and keratynocytes where TMC6 and TMC8 stabilize CIB1 levels and reciprocally. Together with TMC6, also forms a complex with and activates zinc transporter ZNT1 at the ER membrane of keratynocytes, thereby facilitating zinc uptake into the ER. Also inhibits receptor-mediated calcium release from ER stores and calcium activated and volume regulated chloride channels. Down-regulates the activity of transcription factors induced by zinc and cytokines. Also sequesters TRADD which impairs the recruitment of TRAF2 and RIPK1 in the pro-survival complex I and promotes proapoptotic complex II formation, and may therefore be involved in TNF-induced cell death/survival decisions. The protein is Transmembrane channel-like protein 8 of Mus musculus (Mouse).